The sequence spans 286 residues: uncharacterized protein (286 aa).

Transmembrane regions (helical) follow at residues 52–74 (ILWT…LIGL), 79–101 (LIAI…FLFL), 142–161 (WWDP…VSFF), 168–190 (VLVF…GAIL), 203–225 (IQAT…VALV), and 257–276 (IIWI…ASFM).

The protein localises to the cell membrane. This is an uncharacterized protein from Archaeoglobus fulgidus (strain ATCC 49558 / DSM 4304 / JCM 9628 / NBRC 100126 / VC-16).